Consider the following 287-residue polypeptide: Altered inheritance of mitochondria protein 36, mitochondrial (287 aa).

A mitochondrion-targeting transit peptide spans 1–14 (MFRFQRIGQQLVRR). The chain crosses the membrane as a helical span at residues 55-72 (YILYMIALSWAAIFFVSS).

This sequence belongs to the AIM36 family.

The protein resides in the mitochondrion membrane. The protein is Altered inheritance of mitochondria protein 36, mitochondrial (AIM36) of Lodderomyces elongisporus (strain ATCC 11503 / CBS 2605 / JCM 1781 / NBRC 1676 / NRRL YB-4239) (Yeast).